A 781-amino-acid chain; its full sequence is ATP-dependent RNA helicase rok1 (781 aa).

2 disordered regions span residues 7 to 108 (LSRG…KPKL) and 134 to 177 (QDEA…IYPQ). The span at 48–57 (KRGKKRKRKG) shows a compositional bias: basic residues. The span at 66–75 (SGDEDDDASD) shows a compositional bias: acidic residues. Basic and acidic residues-rich tracts occupy residues 84–108 (TPEELAAKKDAELKADEPKKQKPKL) and 139–173 (TEEKPPKKQKKQKEDRKKQEEEEKKKKKKDEDKKQ). The short motif at 184-212 (ELKYTYGIHPVLADNITRQGFRVPTEVQM) is the Q motif element. The 255-residue stretch at 233–487 (DVKVEKGIDF…TKHIDKRAKR (255 aa)) folds into the Helicase ATP-binding domain. 246-253 (APTGSGKT) contacts ATP. The disordered stretch occupies residues 323–386 (ESNEQEETEQ…SRAKGDQKFK (64 aa)). A compositionally biased stretch (acidic residues) spans 339–369 (QDSDSDSEAESEPEEVMKIDEEEEEEEESDS). Positions 370–386 (DAEKKTESRAKGDQKFK) are enriched in basic and acidic residues. The short motif at 434–437 (DEAD) is the DEAD box element. The region spanning 527 to 689 (ALRQLLHPVS…GKDIDEKDTV (163 aa)) is the Helicase C-terminal domain. The segment at 718–781 (RGVESRRTGG…KAEEEWTGLD (64 aa)) is disordered. Over residues 736–752 (SWERRRENNRREAIEAS) the composition is skewed to basic and acidic residues.

The protein belongs to the DEAD box helicase family. DDX52/ROK1 subfamily. In terms of assembly, interacts with the U3 snoRNA and is associated with the 90S and 40S pre-ribosomes.

The protein localises to the nucleus. The protein resides in the nucleolus. It catalyses the reaction ATP + H2O = ADP + phosphate + H(+). ATP-dependent RNA helicase involved in 40S ribosomal subunit biogenesis. Required for the processing and cleavage of 35S pre-rRNA at sites A0, A1, and A2, leading to mature 18S rRNA. The chain is ATP-dependent RNA helicase rok1 (drh-16) from Neurospora crassa (strain ATCC 24698 / 74-OR23-1A / CBS 708.71 / DSM 1257 / FGSC 987).